A 185-amino-acid polypeptide reads, in one-letter code: Large ribosomal subunit protein uL5 (185 aa).

It belongs to the universal ribosomal protein uL5 family. In terms of assembly, part of the 50S ribosomal subunit; part of the 5S rRNA/L5/L18/L25 subcomplex. Contacts the 5S rRNA and the P site tRNA. Forms a bridge to the 30S subunit in the 70S ribosome.

In terms of biological role, this is one of the proteins that bind and probably mediate the attachment of the 5S RNA into the large ribosomal subunit, where it forms part of the central protuberance. In the 70S ribosome it contacts protein S13 of the 30S subunit (bridge B1b), connecting the 2 subunits; this bridge is implicated in subunit movement. Contacts the P site tRNA; the 5S rRNA and some of its associated proteins might help stabilize positioning of ribosome-bound tRNAs. The chain is Large ribosomal subunit protein uL5 from Bartonella bacilliformis (strain ATCC 35685 / KC583 / Herrer 020/F12,63).